The sequence spans 60 residues: Large ribosomal subunit protein bL32 (60 aa).

Residues 1 to 60 (MAVQQVKKSRSKRDMRRSHDSLTGPTLSTDKSTGELHLRHHVSPNGFYKGKKVVDTKSED) are disordered. A compositionally biased stretch (basic residues) spans 7 to 16 (KKSRSKRDMR).

It belongs to the bacterial ribosomal protein bL32 family.

This Francisella philomiragia subsp. philomiragia (strain ATCC 25017 / CCUG 19701 / FSC 153 / O#319-036) protein is Large ribosomal subunit protein bL32.